Reading from the N-terminus, the 178-residue chain is PRA1 family protein 2 (178 aa).

Over Met1–Leu41 the chain is Cytoplasmic. A helical transmembrane segment spans residues Leu42 to Val62. The Extracellular segment spans residues Arg63–Pro64. Residues Leu65–Ala85 traverse the membrane as a helical segment. Over Glu86–Arg96 the chain is Cytoplasmic. A helical membrane pass occupies residues Ser97–Gly119. The Extracellular segment spans residues Ala120–Thr122. The chain crosses the membrane as a helical span at residues Phe123–Leu140. The Cytoplasmic segment spans residues Arg141 to Ser178.

The protein belongs to the PRA1 family. As to quaternary structure, interacts with CCR5 and GDE1.

The protein localises to the endosome membrane. May be involved in ER/Golgi transport and vesicular traffic. Plays a proapoptotic role in cerulenin-induced neuroblastoma apoptosis. The chain is PRA1 family protein 2 (PRAF2) from Bos taurus (Bovine).